The sequence spans 397 residues: MCAKKYKIAALIVAAGVGSRCNSTIPKQYIKLAGKSVLFHTIKRFLANQYIDYIRIAINRDHESFYEKAISLITDTKLLSPVYGGENRQSSVKLGLESLQKINPDFVVIHDACRPFVSDVLIDNLVESMINDQYTGVVPAIEVEDTMSLVSNSFIESTISRGKLRAIQTPQIFNFKELLSCHQSVKEFTDDSSLMVEHKKHVAIIKGEKSNFKLTTKEDINMAKLLFEEPKFRVGAGYDIHKFIKVQNGAESFIKICGVKIEHNMAIEAHSDGDVAIHAIVDAILGALGCGDIGEHFPPSSSEWKDCNSSHFLDFAAKKAKEKGYSVSNLDITIVCEEPKISPYKVEMKKFISKALEIDDEFVNIKATTAEKLGYIGRNEGIAVHASVLLHTNFYWK.

Residues 1–233 are 2-C-methyl-D-erythritol 4-phosphate cytidylyltransferase; it reads MCAKKYKIAA…KLLFEEPKFR (233 aa). Residues 233-397 form a 2-C-methyl-D-erythritol 2,4-cyclodiphosphate synthase region; sequence RVGAGYDIHK…VLLHTNFYWK (165 aa). The a divalent metal cation site is built by Asp-239 and His-241. 4-CDP-2-C-methyl-D-erythritol 2-phosphate is bound by residues 239-241 and 270-271; these read DIH and HS. His-278 contributes to the a divalent metal cation binding site. 4-CDP-2-C-methyl-D-erythritol 2-phosphate is bound by residues 292–294, 368–371, Tyr-375, and Arg-378; these read DIG and TTAE.

The protein in the N-terminal section; belongs to the IspD/TarI cytidylyltransferase family. IspD subfamily. In the C-terminal section; belongs to the IspF family. A divalent metal cation is required as a cofactor.

It catalyses the reaction 2-C-methyl-D-erythritol 4-phosphate + CTP + H(+) = 4-CDP-2-C-methyl-D-erythritol + diphosphate. The enzyme catalyses 4-CDP-2-C-methyl-D-erythritol 2-phosphate = 2-C-methyl-D-erythritol 2,4-cyclic diphosphate + CMP. It participates in isoprenoid biosynthesis; isopentenyl diphosphate biosynthesis via DXP pathway; isopentenyl diphosphate from 1-deoxy-D-xylulose 5-phosphate: step 2/6. Its pathway is isoprenoid biosynthesis; isopentenyl diphosphate biosynthesis via DXP pathway; isopentenyl diphosphate from 1-deoxy-D-xylulose 5-phosphate: step 4/6. Functionally, bifunctional enzyme that catalyzes the formation of 4-diphosphocytidyl-2-C-methyl-D-erythritol from CTP and 2-C-methyl-D-erythritol 4-phosphate (MEP) (IspD), and catalyzes the conversion of 4-diphosphocytidyl-2-C-methyl-D-erythritol 2-phosphate (CDP-ME2P) to 2-C-methyl-D-erythritol 2,4-cyclodiphosphate (ME-CPP) with a corresponding release of cytidine 5-monophosphate (CMP) (IspF). The polypeptide is Bifunctional enzyme IspD/IspF (Wolbachia pipientis wMel).